Reading from the N-terminus, the 367-residue chain is Pentatricopeptide repeat-containing protein At1g11900 (367 aa).

PPR repeat units lie at residues 69–103 (SKID…NICL), 104–139 (PISV…GKEP), 141–175 (SSDC…SLPY), 176–210 (RLIV…ECKP), 211–241 (DVIT…MKED), 247–281 (NIIT…GIEP), 282–316 (DLLS…QIRP), and 317–347 (SVYV…LKNT).

It belongs to the PPR family. P subfamily.

This chain is Pentatricopeptide repeat-containing protein At1g11900, found in Arabidopsis thaliana (Mouse-ear cress).